Consider the following 429-residue polypeptide: Histidine--tRNA ligase (429 aa).

The protein belongs to the class-II aminoacyl-tRNA synthetase family. Homodimer.

The protein resides in the cytoplasm. It catalyses the reaction tRNA(His) + L-histidine + ATP = L-histidyl-tRNA(His) + AMP + diphosphate + H(+). In Streptococcus pneumoniae (strain Hungary19A-6), this protein is Histidine--tRNA ligase.